The chain runs to 350 residues: 3-isopropylmalate dehydrogenase (350 aa).

NAD(+) is bound at residue 71–84 (GPKWADAPRHLRPE). 4 residues coordinate substrate: arginine 91, arginine 101, arginine 129, and aspartate 220. 3 residues coordinate Mg(2+): aspartate 220, aspartate 244, and aspartate 248. Residue 279 to 291 (GSAPDIAGKGLAN) coordinates NAD(+).

This sequence belongs to the isocitrate and isopropylmalate dehydrogenases family. LeuB type 1 subfamily. Homodimer. The cofactor is Mg(2+). It depends on Mn(2+) as a cofactor.

The protein resides in the cytoplasm. The catalysed reaction is (2R,3S)-3-isopropylmalate + NAD(+) = 4-methyl-2-oxopentanoate + CO2 + NADH. It functions in the pathway amino-acid biosynthesis; L-leucine biosynthesis; L-leucine from 3-methyl-2-oxobutanoate: step 3/4. Its function is as follows. Catalyzes the oxidation of 3-carboxy-2-hydroxy-4-methylpentanoate (3-isopropylmalate) to 3-carboxy-4-methyl-2-oxopentanoate. The product decarboxylates to 4-methyl-2 oxopentanoate. The chain is 3-isopropylmalate dehydrogenase from Caulobacter vibrioides (strain ATCC 19089 / CIP 103742 / CB 15) (Caulobacter crescentus).